A 364-amino-acid chain; its full sequence is D-alanine--D-alanine ligase A (364 aa).

Positions 145–348 (KRLLRDAGLN…YTDLITRLIE (204 aa)) constitute an ATP-grasp domain. Residue 175 to 230 (ESKLGLPLFVKPANQGSSVGVSKVTSEEQYTIAVDLAFEFDHKVIVEQGIKGREIE) coordinates ATP. Asp-302, Glu-315, and Asn-317 together coordinate Mg(2+).

The protein belongs to the D-alanine--D-alanine ligase family. Requires Mg(2+) as cofactor. Mn(2+) is required as a cofactor.

The protein localises to the cytoplasm. The catalysed reaction is 2 D-alanine + ATP = D-alanyl-D-alanine + ADP + phosphate + H(+). The protein operates within cell wall biogenesis; peptidoglycan biosynthesis. Cell wall formation. The polypeptide is D-alanine--D-alanine ligase A (Escherichia coli O6:H1 (strain CFT073 / ATCC 700928 / UPEC)).